Reading from the N-terminus, the 1034-residue chain is Potassium-transporting ATPase alpha chain 1 (1034 aa).

Topologically, residues 1–97 (MGKAENYEMY…NALRPPRGTP (97 aa)) are cytoplasmic. Phosphotyrosine is present on residues Tyr7 and Tyr10. The tract at residues 14–41 (LGPGPGGDMAAKMSKKKAGKGGGKKKEK) is disordered. Basic residues predominate over residues 26 to 39 (MSKKKAGKGGGKKK). Ser27 is modified (phosphoserine). Residues 98–118 (EYVKFARQLAGGLQCLMWVAA) form a helical membrane-spanning segment. Topologically, residues 119 to 141 (AICLIAFAIQASEGDLTTDDNLY) are lumenal. Residues 142–162 (LALALIAVVVVTGCFGYYQEF) form a helical membrane-spanning segment. At 163 to 298 (KSTNIIASFK…NEKTPIAIEI (136 aa)) the chain is on the cytoplasmic side. Residues 225-239 (NSSLTGESEPQTRSP) show a composition bias toward polar residues. The interval 225 to 245 (NSSLTGESEPQTRSPECTHES) is disordered. The chain crosses the membrane as a helical span at residues 299–318 (EHFVDIIAGLAILFGATFFV). Topologically, residues 319–330 (VAMCIGYTFLRA) are lumenal. Residues 331 to 348 (MVFFMAIVVAYVPEGLLA) traverse the membrane as a helical segment. K(+) contacts are provided by Val339, Ala340, Val342, and Glu344. Residues 349-782 (TVTVCLSLTA…EQGRLIFDNL (434 aa)) lie on the Cytoplasmic side of the membrane. Asp386 acts as the 4-aspartylphosphate intermediate in catalysis. 2 residues coordinate Mg(2+): Asp386 and Thr388. Residues Ser462 and Ser600 each carry the phosphoserine modification. Mg(2+)-binding residues include Asp727 and Asp731. Residues 783–802 (KKSIAYTLTKNIPELTPYLI) form a helical membrane-spanning segment. Glu796 contributes to the K(+) binding site. Topologically, residues 803–812 (YITVSVPLPL) are lumenal. Residues 813 to 833 (GCITILFIELCTDIFPSVSLA) form a helical membrane-spanning segment. Glu821 lines the K(+) pocket. Residues 834–853 (YEKAESDIMHLRPRNPKRDR) lie on the Cytoplasmic side of the membrane. A Phosphoserine modification is found at Ser839. Residues 854 to 876 (LVNEPLAAYSYFQIGAIQSFAGF) traverse the membrane as a helical segment. The Lumenal portion of the chain corresponds to 877 to 928 (TDYFTAMAQEGWFPLLCVGLRPYWENHHLQDLQDSYGQEWTFGQRLYQQYTC). A helical transmembrane segment spans residues 929–948 (YTVFFISIEMCQIADVLIRK). Residues 949–962 (TRRLSAFQQGFFRN) are Cytoplasmic-facing. At Ser953 the chain carries Phosphoserine; by PKA. Residues 963–981 (RILVIAIVFQVCIGCFLCY) traverse the membrane as a helical segment. Residues 982 to 996 (CPGMPNIFNFMPIRY) are Lumenal-facing. A helical transmembrane segment spans residues 997-1017 (QWWLVPMPFGLLIFVYDEIRK). The Cytoplasmic portion of the chain corresponds to 1018–1034 (LGVRCCPGSWWDQELYY).

Belongs to the cation transport ATPase (P-type) (TC 3.A.3) family. Type IIC subfamily. As to quaternary structure, the gastric H(+)/K(+) ATPase pump is composed of the catalytic alpha subunit ATP4A and the regulatory beta subunit ATP4B. Interacts (via the P-domain) with ATP4B (via N-terminus); this interaction stabilizes the lumenal-open E2 conformation state and prevents the reverse reaction of the transport cycle.

It is found in the apical cell membrane. It carries out the reaction K(+)(out) + ATP + H2O + H(+)(in) = K(+)(in) + ADP + phosphate + 2 H(+)(out). Its function is as follows. The catalytic subunit of the gastric H(+)/K(+) ATPase pump which transports H(+) ions in exchange for K(+) ions across the apical membrane of parietal cells. Uses ATP as an energy source to pump H(+) ions to the gastric lumen while transporting K(+) ion from the lumen into the cell. Remarkably generates a million-fold proton gradient across the gastric parietal cell membrane, acidifying the gastric juice down to pH 1. Within a transport cycle, the transfer of a H(+) ion across the membrane is coupled to ATP hydrolysis and is associated with a transient phosphorylation that shifts the pump conformation from inward-facing (E1) to outward-facing state (E2). The release of the H(+) ion in the stomach lumen is followed by binding of K(+) ion converting the pump conformation back to the E1 state. The polypeptide is Potassium-transporting ATPase alpha chain 1 (ATP4A) (Canis lupus familiaris (Dog)).